A 252-amino-acid polypeptide reads, in one-letter code: Hydroxyacylglutathione hydrolase (252 aa).

Residues His54, His56, Asp58, His59, His111, Asp128, and His166 each contribute to the Zn(2+) site.

Belongs to the metallo-beta-lactamase superfamily. Glyoxalase II family. In terms of assembly, monomer. Zn(2+) is required as a cofactor.

It catalyses the reaction an S-(2-hydroxyacyl)glutathione + H2O = a 2-hydroxy carboxylate + glutathione + H(+). It functions in the pathway secondary metabolite metabolism; methylglyoxal degradation; (R)-lactate from methylglyoxal: step 2/2. Its function is as follows. Thiolesterase that catalyzes the hydrolysis of S-D-lactoyl-glutathione to form glutathione and D-lactic acid. This chain is Hydroxyacylglutathione hydrolase, found in Vibrio cholerae serotype O1 (strain ATCC 39541 / Classical Ogawa 395 / O395).